Reading from the N-terminus, the 28-residue chain is MSHIVRFTGLLLLNAFIVRGRPVGGIQH.

In terms of biological role, involved in control of the biosynthesis of leucine. This chain is leu operon leader peptide (leuL), found in Salmonella typhimurium (strain LT2 / SGSC1412 / ATCC 700720).